The following is a 174-amino-acid chain: Ribosome maturation factor RimM (174 aa).

Residues 96 to 169 (EPDTYYDHQL…ILEIDPPDGL (74 aa)) enclose the PRC barrel domain.

This sequence belongs to the RimM family. Binds ribosomal protein uS19.

It localises to the cytoplasm. In terms of biological role, an accessory protein needed during the final step in the assembly of 30S ribosomal subunit, possibly for assembly of the head region. Essential for efficient processing of 16S rRNA. May be needed both before and after RbfA during the maturation of 16S rRNA. It has affinity for free ribosomal 30S subunits but not for 70S ribosomes. In Mycobacterium marinum (strain ATCC BAA-535 / M), this protein is Ribosome maturation factor RimM.